Here is a 76-residue protein sequence, read N- to C-terminus: Sec-independent protein translocase protein TatA (76 aa).

A helical membrane pass occupies residues 1–21 (MGSFSIWHWLIVLVIVALVFG). Composition is skewed to basic and acidic residues over residues 39–50 (FKDGMKGEDDKP) and 64–76 (GTVD…KSNS). The tract at residues 39-76 (FKDGMKGEDDKPAAQNAAPSQVADKGTVDVEVKEKSNS) is disordered.

It belongs to the TatA/E family. In terms of assembly, the Tat system comprises two distinct complexes: a TatABC complex, containing multiple copies of TatA, TatB and TatC subunits, and a separate TatA complex, containing only TatA subunits. Substrates initially bind to the TatABC complex, which probably triggers association of the separate TatA complex to form the active translocon.

The protein resides in the cell inner membrane. In terms of biological role, part of the twin-arginine translocation (Tat) system that transports large folded proteins containing a characteristic twin-arginine motif in their signal peptide across membranes. TatA could form the protein-conducting channel of the Tat system. The polypeptide is Sec-independent protein translocase protein TatA (Herminiimonas arsenicoxydans).